Consider the following 175-residue polypeptide: Ribosome maturation factor RimM (175 aa).

In terms of domain architecture, PRC barrel spans 96 to 175 (EDEFYWRELF…RIEVDWDPGF (80 aa)).

It belongs to the RimM family. In terms of assembly, binds ribosomal protein uS19.

Its subcellular location is the cytoplasm. In terms of biological role, an accessory protein needed during the final step in the assembly of 30S ribosomal subunit, possibly for assembly of the head region. Essential for efficient processing of 16S rRNA. May be needed both before and after RbfA during the maturation of 16S rRNA. It has affinity for free ribosomal 30S subunits but not for 70S ribosomes. The chain is Ribosome maturation factor RimM from Aliivibrio fischeri (strain ATCC 700601 / ES114) (Vibrio fischeri).